The primary structure comprises 149 residues: Transcriptional regulator MraZ (149 aa).

2 SpoVT-AbrB domains span residues 7–54 (KYVN…GISH) and 83–126 (AVQL…QPQN).

This sequence belongs to the MraZ family. Forms oligomers.

It localises to the cytoplasm. The protein resides in the nucleoid. This chain is Transcriptional regulator MraZ, found in Rickettsia felis (strain ATCC VR-1525 / URRWXCal2) (Rickettsia azadi).